We begin with the raw amino-acid sequence, 248 residues long: Undecaprenyl-diphosphatase (248 aa).

8 helical membrane-spanning segments follow: residues I4–L24, F40–V60, Y74–F94, S101–V121, I134–I154, A174–T194, S201–L221, and K228–G248.

It belongs to the UppP family.

It is found in the cell inner membrane. It catalyses the reaction di-trans,octa-cis-undecaprenyl diphosphate + H2O = di-trans,octa-cis-undecaprenyl phosphate + phosphate + H(+). Catalyzes the dephosphorylation of undecaprenyl diphosphate (UPP). Confers resistance to bacitracin. The chain is Undecaprenyl-diphosphatase from Thermosipho africanus (strain TCF52B).